The following is an 87-amino-acid chain: Small ribosomal subunit protein uS15 (87 aa).

This sequence belongs to the universal ribosomal protein uS15 family. In terms of assembly, part of the 30S ribosomal subunit. Forms a bridge to the 50S subunit in the 70S ribosome, contacting the 23S rRNA.

One of the primary rRNA binding proteins, it binds directly to 16S rRNA where it helps nucleate assembly of the platform of the 30S subunit by binding and bridging several RNA helices of the 16S rRNA. Its function is as follows. Forms an intersubunit bridge (bridge B4) with the 23S rRNA of the 50S subunit in the ribosome. The protein is Small ribosomal subunit protein uS15 of Pseudothermotoga lettingae (strain ATCC BAA-301 / DSM 14385 / NBRC 107922 / TMO) (Thermotoga lettingae).